A 344-amino-acid chain; its full sequence is Lipase chaperone (344 aa).

A helical membrane pass occupies residues 14-34 (AVVYGVVGLAAIAGVAMWSGA). A disordered region spans residues 39–78 (ATGASGESPEASVAGGSVTAPPQAAVPASTGLPPSLAGSS).

Belongs to the lipase chaperone family.

It is found in the cell inner membrane. In terms of biological role, may be involved in the folding of the extracellular lipase during its passage through the periplasm. The sequence is that of Lipase chaperone (lifO) from Pseudomonas sp. (strain KWI-56).